Here is a 295-residue protein sequence, read N- to C-terminus: UDP-N-acetylenolpyruvoylglucosamine reductase (295 aa).

The FAD-binding PCMH-type domain maps to 23–188 (QVGGPADFLA…ISAKFALKPG (166 aa)). Arginine 167 is a catalytic residue. Serine 217 acts as the Proton donor in catalysis. Glutamate 287 is a catalytic residue.

It belongs to the MurB family. The cofactor is FAD.

It localises to the cytoplasm. The enzyme catalyses UDP-N-acetyl-alpha-D-muramate + NADP(+) = UDP-N-acetyl-3-O-(1-carboxyvinyl)-alpha-D-glucosamine + NADPH + H(+). It functions in the pathway cell wall biogenesis; peptidoglycan biosynthesis. Its function is as follows. Cell wall formation. This chain is UDP-N-acetylenolpyruvoylglucosamine reductase, found in Streptococcus equi subsp. equi (strain 4047).